Here is a 308-residue protein sequence, read N- to C-terminus: Methionyl-tRNA formyltransferase (308 aa).

A (6S)-5,6,7,8-tetrahydrofolate-binding site is contributed by 109–112 (SLLP).

This sequence belongs to the Fmt family.

The enzyme catalyses L-methionyl-tRNA(fMet) + (6R)-10-formyltetrahydrofolate = N-formyl-L-methionyl-tRNA(fMet) + (6S)-5,6,7,8-tetrahydrofolate + H(+). Attaches a formyl group to the free amino group of methionyl-tRNA(fMet). The formyl group appears to play a dual role in the initiator identity of N-formylmethionyl-tRNA by promoting its recognition by IF2 and preventing the misappropriation of this tRNA by the elongation apparatus. The sequence is that of Methionyl-tRNA formyltransferase from Salinispora tropica (strain ATCC BAA-916 / DSM 44818 / JCM 13857 / NBRC 105044 / CNB-440).